Consider the following 513-residue polypeptide: Lysine--tRNA ligase (513 aa).

Residues Glu423 and Glu430 each contribute to the Mg(2+) site.

The protein belongs to the class-II aminoacyl-tRNA synthetase family. As to quaternary structure, homodimer. Mg(2+) is required as a cofactor.

It is found in the cytoplasm. The enzyme catalyses tRNA(Lys) + L-lysine + ATP = L-lysyl-tRNA(Lys) + AMP + diphosphate. This Anaeromyxobacter dehalogenans (strain 2CP-C) protein is Lysine--tRNA ligase.